The primary structure comprises 355 residues: Cytoplasmic tRNA 2-thiolation protein 1 (355 aa).

Positions 320 to 341 are disordered; it reads GIGRPRGVNGDHNKETKKPGSV. The span at 328-337 shows a compositional bias: basic and acidic residues; the sequence is NGDHNKETKK.

Belongs to the TtcA family. CTU1/NCS6/ATPBD3 subfamily.

It is found in the cytoplasm. Its pathway is tRNA modification; 5-methoxycarbonylmethyl-2-thiouridine-tRNA biosynthesis. In terms of biological role, plays a central role in 2-thiolation of mcm(5)S(2)U at tRNA wobble positions of tRNA(Lys), tRNA(Glu) and tRNA(Gln). Directly binds tRNAs and probably acts by catalyzing adenylation of tRNAs, an intermediate required for 2-thiolation. It is unclear whether it acts as a sulfurtransferase that transfers sulfur from thiocarboxylated URM1 onto the uridine of tRNAs at wobble position. The polypeptide is Cytoplasmic tRNA 2-thiolation protein 1 (Arabidopsis thaliana (Mouse-ear cress)).